A 171-amino-acid chain; its full sequence is UPF0303 protein YPTS_2661 (171 aa).

The protein belongs to the UPF0303 family.

The chain is UPF0303 protein YPTS_2661 from Yersinia pseudotuberculosis serotype IB (strain PB1/+).